The primary structure comprises 488 residues: Glutamyl-tRNA(Gln) amidotransferase subunit A (488 aa).

Residues lysine 77 and serine 152 each act as charge relay system in the active site. Serine 176 serves as the catalytic Acyl-ester intermediate.

Belongs to the amidase family. GatA subfamily. As to quaternary structure, heterotrimer of A, B and C subunits.

It catalyses the reaction L-glutamyl-tRNA(Gln) + L-glutamine + ATP + H2O = L-glutaminyl-tRNA(Gln) + L-glutamate + ADP + phosphate + H(+). Its function is as follows. Allows the formation of correctly charged Gln-tRNA(Gln) through the transamidation of misacylated Glu-tRNA(Gln) in organisms which lack glutaminyl-tRNA synthetase. The reaction takes place in the presence of glutamine and ATP through an activated gamma-phospho-Glu-tRNA(Gln). This chain is Glutamyl-tRNA(Gln) amidotransferase subunit A, found in Streptococcus pyogenes serotype M49 (strain NZ131).